A 222-amino-acid polypeptide reads, in one-letter code: Small ribosomal subunit protein eS1 (222 aa).

Belongs to the eukaryotic ribosomal protein eS1 family.

The sequence is that of Small ribosomal subunit protein eS1 from Pyrobaculum calidifontis (strain DSM 21063 / JCM 11548 / VA1).